The following is a 315-amino-acid chain: Tyrosine--tRNA ligase (315 aa).

Y32 contributes to the L-tyrosine binding site. The 'HIGH' region motif lies at 37-45 (PSGEIHLGH). Residues Y152, Q156, D159, and Q174 each contribute to the L-tyrosine site. Residues 208–212 (KMSSS) carry the 'KMSKS' region motif. Residue S211 coordinates ATP.

This sequence belongs to the class-I aminoacyl-tRNA synthetase family. TyrS type 3 subfamily. In terms of assembly, homodimer.

The protein resides in the cytoplasm. The catalysed reaction is tRNA(Tyr) + L-tyrosine + ATP = L-tyrosyl-tRNA(Tyr) + AMP + diphosphate + H(+). Catalyzes the attachment of tyrosine to tRNA(Tyr) in a two-step reaction: tyrosine is first activated by ATP to form Tyr-AMP and then transferred to the acceptor end of tRNA(Tyr). The sequence is that of Tyrosine--tRNA ligase from Methanoculleus marisnigri (strain ATCC 35101 / DSM 1498 / JR1).